The primary structure comprises 354 residues: UDP-3-O-acylglucosamine N-acyltransferase (354 aa).

The active-site Proton acceptor is histidine 257. Residues 335-354 form a disordered region; that stretch reads AQQVSKSKLRGRNPGGKQND.

The protein belongs to the transferase hexapeptide repeat family. LpxD subfamily. As to quaternary structure, homotrimer.

The catalysed reaction is a UDP-3-O-[(3R)-3-hydroxyacyl]-alpha-D-glucosamine + a (3R)-hydroxyacyl-[ACP] = a UDP-2-N,3-O-bis[(3R)-3-hydroxyacyl]-alpha-D-glucosamine + holo-[ACP] + H(+). It functions in the pathway bacterial outer membrane biogenesis; LPS lipid A biosynthesis. Catalyzes the N-acylation of UDP-3-O-acylglucosamine using 3-hydroxyacyl-ACP as the acyl donor. Is involved in the biosynthesis of lipid A, a phosphorylated glycolipid that anchors the lipopolysaccharide to the outer membrane of the cell. This is UDP-3-O-acylglucosamine N-acyltransferase from Rhizobium etli (strain ATCC 51251 / DSM 11541 / JCM 21823 / NBRC 15573 / CFN 42).